A 208-amino-acid polypeptide reads, in one-letter code: uncharacterized protein (208 aa).

This is an uncharacterized protein from Acidianus sp. F28 (AFV-2).